Reading from the N-terminus, the 387-residue chain is Sorting nexin-7 (387 aa).

In terms of domain architecture, PX spans 30–151; sequence KDLFITVDEP…IFLTAQAWEL (122 aa). 4 residues coordinate a 1,2-diacyl-sn-glycero-3-phospho-(1D-myo-inositol-3-phosphate): R73, Q75, K103, and R117. The region spanning 178–387 is the BAR domain; the sequence is GVKNRPEEFM…HLEETSEDKP (210 aa).

Belongs to the sorting nexin family. Heterodimer; heterodimerizes with SNX4.

It is found in the early endosome membrane. In terms of biological role, involved in the regulation of endocytosis and in several stages of intracellular trafficking. Together with SNX4, involved in autophagosome assembly by regulating trafficking and recycling of phospholipid scramblase ATG9A. This chain is Sorting nexin-7 (SNX7), found in Macaca fascicularis (Crab-eating macaque).